Consider the following 267-residue polypeptide: Thiamine thiazole synthase (267 aa).

Residues serine 41, 60 to 61 (ER), glycine 68, valine 132, and 160 to 162 (HVD) contribute to the NAD(+) site. Residues aspartate 162 and histidine 177 each coordinate Fe cation. Methionine 227 contacts NAD(+). Glycine is bound at residue arginine 237.

The protein belongs to the THI4 family. In terms of assembly, homooctamer; tetramer of dimers. It depends on Fe(2+) as a cofactor.

The enzyme catalyses hydrogen sulfide + glycine + NAD(+) = ADP-5-ethyl-4-methylthiazole-2-carboxylate + nicotinamide + 3 H2O + H(+). It participates in cofactor biosynthesis; thiamine diphosphate biosynthesis. In terms of biological role, involved in the biosynthesis of the thiazole moiety of thiamine. Catalyzes the conversion of NAD and glycine to adenosine diphosphate 5-(2-hydroxyethyl)-4-methylthiazole-2-carboxylate (ADT), an adenylated thiazole intermediate, using free sulfide as a source of sulfur. In Saccharolobus islandicus (strain Y.N.15.51 / Yellowstone #2) (Sulfolobus islandicus), this protein is Thiamine thiazole synthase.